A 560-amino-acid polypeptide reads, in one-letter code: Chaperonin GroEL 2 (560 aa).

ATP is bound by residues 29 to 32, 86 to 90, Gly413, 478 to 480, and Asp494; these read TLGP, DGTTT, and NAA.

The protein belongs to the chaperonin (HSP60) family. Forms a cylinder of 14 subunits composed of two heptameric rings stacked back-to-back. Interacts with the co-chaperonin GroES.

It is found in the cytoplasm. It carries out the reaction ATP + H2O + a folded polypeptide = ADP + phosphate + an unfolded polypeptide.. Its function is as follows. Together with its co-chaperonin GroES, plays an essential role in assisting protein folding. The GroEL-GroES system forms a nano-cage that allows encapsulation of the non-native substrate proteins and provides a physical environment optimized to promote and accelerate protein folding. This is Chaperonin GroEL 2 from Trichormus variabilis (strain ATCC 29413 / PCC 7937) (Anabaena variabilis).